The following is a 345-amino-acid chain: Papain (345 aa).

The N-terminal stretch at 1–18 (MAMIPSISKLLFVAICLF) is a signal peptide. Positions 19-133 (VYMGLSFGDF…EEVLNDGDVN (115 aa)) are cleaved as a propeptide — activation peptide. 3 disulfides stabilise this stretch: cysteine 155–cysteine 196, cysteine 189–cysteine 228, and cysteine 286–cysteine 333. Residue cysteine 158 is part of the active site. Cysteine 158 provides a ligand contact to E64. Leupeptin is bound at residue cysteine 158. Catalysis depends on residues histidine 292 and asparagine 308.

Belongs to the peptidase C1 family.

It catalyses the reaction Hydrolysis of proteins with broad specificity for peptide bonds, but preference for an amino acid bearing a large hydrophobic side chain at the P2 position. Does not accept Val in P1'.. Its activity is regulated as follows. Repressed by the active-site-directed cysteine protease inhibitor E64 (L-trans-epoxysuccinyl-leucylamide-(4-guanido)-butane) produced by Aspergillus japonicus. Inhibited by the inhibitor of cysteine proteases from Trypanosoma brucei (TbICP, rhodesain) and Colocasia esculenta cv. Kaohsiung no. 1 (CeCPI, tarocystatin). Repressed by leupeptin, a peptidic cysteine, serine and threonine protease inhibitor. Functionally, cysteine proteinase with a high level of diversity in substrate specificity, an amino acid bearing a large hydrophobic side chain at the P2 position is preferred. In Carica papaya (Papaya), this protein is Papain.